Reading from the N-terminus, the 358-residue chain is Protein PXR1 (358 aa).

2 disordered regions span residues 1-26 (MGLAAPKNRSKISNDPQNTTWANNTS) and 146-342 (EVKT…KSAT). The span at 11–26 (KISNDPQNTTWANNTS) shows a compositional bias: polar residues. The 55-residue stretch at 25–79 (TSRFGHRILTSQGWQPGDSLGASDAAHAAHYTVASQSHIRVLLKDDNLGLGAKRG) folds into the G-patch domain. 2 stretches are compositionally biased toward basic and acidic residues: residues 146–171 (EVKTETQAKVEVKSEPESDGAKEDDR) and 199–217 (SMDLRDQAKKDIAAESSKD). Residues 218–227 (KKGKKSKKDK) show a composition bias toward basic residues. Positions 287-299 (DVEDLSSESEDES) are enriched in acidic residues. The span at 300–315 (TPSASRPATGTSTPTV) shows a compositional bias: polar residues. Basic residues predominate over residues 328 to 339 (HSVRQKWIRSKK).

It belongs to the PINX1 family.

It is found in the nucleus. The protein localises to the nucleolus. Its function is as follows. Involved in rRNA-processing at A0, A1 and A2 sites and negatively regulates telomerase. The protein is Protein PXR1 (PXR1) of Phaeosphaeria nodorum (strain SN15 / ATCC MYA-4574 / FGSC 10173) (Glume blotch fungus).